The following is a 485-amino-acid chain: N-succinylglutamate 5-semialdehyde dehydrogenase 2 (485 aa).

221–226 contacts NAD(+); sequence GSAAAG. Residues Glu-244 and Cys-279 contribute to the active site.

Belongs to the aldehyde dehydrogenase family. AstD subfamily.

It carries out the reaction N-succinyl-L-glutamate 5-semialdehyde + NAD(+) + H2O = N-succinyl-L-glutamate + NADH + 2 H(+). It participates in amino-acid degradation; L-arginine degradation via AST pathway; L-glutamate and succinate from L-arginine: step 4/5. Functionally, catalyzes the NAD-dependent reduction of succinylglutamate semialdehyde into succinylglutamate. This Caulobacter vibrioides (strain ATCC 19089 / CIP 103742 / CB 15) (Caulobacter crescentus) protein is N-succinylglutamate 5-semialdehyde dehydrogenase 2.